Reading from the N-terminus, the 169-residue chain is Peptide deformylase 1 (169 aa).

The Fe cation site is built by C93 and H135. The active site involves E136. Residue H139 coordinates Fe cation.

It belongs to the polypeptide deformylase family. Fe(2+) serves as cofactor.

The catalysed reaction is N-terminal N-formyl-L-methionyl-[peptide] + H2O = N-terminal L-methionyl-[peptide] + formate. Its function is as follows. Removes the formyl group from the N-terminal Met of newly synthesized proteins. Requires at least a dipeptide for an efficient rate of reaction. N-terminal L-methionine is a prerequisite for activity but the enzyme has broad specificity at other positions. The protein is Peptide deformylase 1 of Corynebacterium glutamicum (strain ATCC 13032 / DSM 20300 / JCM 1318 / BCRC 11384 / CCUG 27702 / LMG 3730 / NBRC 12168 / NCIMB 10025 / NRRL B-2784 / 534).